The chain runs to 206 residues: dCTP deaminase, dUMP-forming (206 aa).

DCTP is bound by residues 117–122 (RSSFGR), Asp-135, 143–145 (TLE), Gln-163, Tyr-177, Lys-184, and Gln-188. Glu-145 functions as the Proton donor/acceptor in the catalytic mechanism.

The protein belongs to the dCTP deaminase family. In terms of assembly, homotrimer.

It catalyses the reaction dCTP + 2 H2O = dUMP + NH4(+) + diphosphate. Its pathway is pyrimidine metabolism; dUMP biosynthesis; dUMP from dCTP: step 1/1. Functionally, bifunctional enzyme that catalyzes both the deamination of dCTP to dUTP and the hydrolysis of dUTP to dUMP without releasing the toxic dUTP intermediate. In Methanococcus maripaludis (strain C7 / ATCC BAA-1331), this protein is dCTP deaminase, dUMP-forming.